Reading from the N-terminus, the 520-residue chain is Peptide chain release factor 3 (520 aa).

Residues 8–273 form the tr-type G domain; sequence ESRKTFAIIS…AYVDHAPMPN (266 aa). GTP contacts are provided by residues 17 to 24, 85 to 89, and 139 to 142; these read SHPDAGKT, DTPGH, and NKLD.

This sequence belongs to the TRAFAC class translation factor GTPase superfamily. Classic translation factor GTPase family. PrfC subfamily.

The protein localises to the cytoplasm. In terms of biological role, increases the formation of ribosomal termination complexes and stimulates activities of RF-1 and RF-2. It binds guanine nucleotides and has strong preference for UGA stop codons. It may interact directly with the ribosome. The stimulation of RF-1 and RF-2 is significantly reduced by GTP and GDP, but not by GMP. The sequence is that of Peptide chain release factor 3 from Staphylococcus carnosus (strain TM300).